A 222-amino-acid chain; its full sequence is Glutathione S-transferase alpha-4 (222 aa).

Position 1 is an N-acetylmethionine (methionine 1). One can recognise a GST N-terminal domain in the interval 3-83 (VKPKLYYFQG…YLAAKYNLYG (81 aa)). Glutathione is bound by residues tyrosine 9, 54 to 55 (QV), and 67 to 68 (QT). One can recognise a GST C-terminal domain in the interval 85–208 (DLKERVRIDM…QPGSQRKPPP (124 aa)).

This sequence belongs to the GST superfamily. Alpha family. Homodimer.

The protein resides in the cytoplasm. The catalysed reaction is RX + glutathione = an S-substituted glutathione + a halide anion + H(+). Conjugation of reduced glutathione to a wide number of exogenous and endogenous hydrophobic electrophiles. This Rattus norvegicus (Rat) protein is Glutathione S-transferase alpha-4 (Gsta4).